Here is a 106-residue protein sequence, read N- to C-terminus: uncharacterized protein (106 aa).

Belongs to the HesB/IscA family.

This is an uncharacterized protein from Sinorhizobium fredii (strain NBRC 101917 / NGR234).